We begin with the raw amino-acid sequence, 57 residues long: Potassium channel toxin alpha-KTx 26.3 (57 aa).

The N-terminal stretch at 1–15 (MSGLSVFILIALVLS) is a signal peptide. Residues 16–24 (VIIDVLNNS) constitute a propeptide that is removed on maturation. Intrachain disulfides connect Cys30–Cys48, Cys34–Cys53, and Cys38–Cys55.

This sequence belongs to the short scorpion toxin superfamily. Potassium channel inhibitor family. Alpha-KTx 26 subfamily. Expressed by the venom gland.

It localises to the secreted. Functionally, recombinant toxin that reversibly inhibits the potassium current of mKv1.3/KCNA3 channel stably expressed in COS7 cells (IC(50)=150 nM). The sequence is that of Potassium channel toxin alpha-KTx 26.3 from Mesobuthus gibbosus (Mediterranean checkered scorpion).